The chain runs to 652 residues: MTVTPRTGSRIEELLARSGRFFIPGEISADLRTVTRRGGRDGDVFYRDRWSHDKVVRSTHGVNCTGSCSWKIYVKDDIITWETQETDYPSVGPDRPEYEPRGCPRGAAFSWYTYSPTRVRHPYARGVLVEMYREAKARLGDPVAAWADIQADPRRRRRYQRARGKGGLVRVSWAEATEMIAAAHVHTISTYGPDRVAGFSPIPAMSMVSHAAGSRFVELIGGVMTSFYDWYADLPVASPQVFGDQTDVPESGDWWDVVWQCASVLLTYPNSRQLGTAEELLAHIDGPAADLLGRTVSELRRADPLTAATRYVDTFDLRGRATLYLTYWTAGDTRNRGREMLAFAQTYRSTDVAPPRGETPDFLPVVLEFAATVDPEAGRRLLSGYRVPIAALCNALTEAALPYAHTVAAVCRTGDMMGELFWTVVPYVTMTIVAVGSWWRYRYDKFGWTTRSSQLYESRLLRIASPMFHFGILVVIVGHGIGLVIPQSWTQAAGLSEGAYHVQAVVLGSIAGITTLAGVTLLIYRRRTRGPVFMATTVNDKVMYLVLVAAIVAGLGATALGSGVVGEAYNYRETVSVWFRSVWVLQPRGDLMAEAPLYYQIHVLIGLALFALWPFTRLVHAFSAPIGYLFRPYIIYRSREELVLTRPRRRGW.

The segment at 1–251 is nitrate reductase alpha subunit; that stretch reads MTVTPRTGSR…FGDQTDVPES (251 aa). Residues 53-117 form the 4Fe-4S Mo/W bis-MGD-type domain; that stretch reads DKVVRSTHGV…AFSWYTYSPT (65 aa). 4 residues coordinate [4Fe-4S] cluster: histidine 60, cysteine 64, cysteine 68, and cysteine 103. Aspartate 233 provides a ligand contact to Mo-bis(molybdopterin guanine dinucleotide). The segment at 258 to 415 is nitrate reductase delta subunit; sequence VWQCASVLLT…TVAAVCRTGD (158 aa). Transmembrane regions (helical) follow at residues 416–436, 466–486, 504–524, 545–565, and 595–615; these read MMGELFWTVVPYVTMTIVAVG, PMFHFGILVVIVGHGIGLVIP, AVVLGSIAGITTLAGVTLLIY, LVLVAAIVAGLGATALGSGVV, and APLYYQIHVLIGLALFALWPF. The tract at residues 416–652 is nitrate reductase gamma subunit; that stretch reads MMGELFWTVV…VLTRPRRRGW (237 aa). The heme b site is built by histidine 469 and histidine 479. Residues histidine 602 and histidine 620 each coordinate heme b.

In the N-terminal section; belongs to the nitrate reductase alpha subunit family. The protein in the central section; belongs to the NarJ/NarW family. It in the C-terminal section; belongs to the nitrate reductase gamma subunit family. [4Fe-4S] cluster is required as a cofactor. The cofactor is Mo-bis(molybdopterin guanine dinucleotide). Heme b serves as cofactor.

Its subcellular location is the cell membrane. In terms of biological role, does not seem to have nitrate reductase activity. This Mycobacterium tuberculosis (strain CDC 1551 / Oshkosh) protein is Nitrate reductase-like protein NarX (narX).